Here is a 72-residue protein sequence, read N- to C-terminus: Translation initiation factor IF-1 (72 aa).

One can recognise an S1-like domain in the interval 1–72 (MAKDDVIQMQ…SRARIVFRAK (72 aa)).

This sequence belongs to the IF-1 family. As to quaternary structure, component of the 30S ribosomal translation pre-initiation complex which assembles on the 30S ribosome in the order IF-2 and IF-3, IF-1 and N-formylmethionyl-tRNA(fMet); mRNA recruitment can occur at any time during PIC assembly.

Its subcellular location is the cytoplasm. One of the essential components for the initiation of protein synthesis. Stabilizes the binding of IF-2 and IF-3 on the 30S subunit to which N-formylmethionyl-tRNA(fMet) subsequently binds. Helps modulate mRNA selection, yielding the 30S pre-initiation complex (PIC). Upon addition of the 50S ribosomal subunit IF-1, IF-2 and IF-3 are released leaving the mature 70S translation initiation complex. In Burkholderia mallei (strain NCTC 10247), this protein is Translation initiation factor IF-1.